We begin with the raw amino-acid sequence, 218 residues long: Large ribosomal subunit protein uL3 (218 aa).

A disordered region spans residues 134–154 (GRASHGNSRSHNVPGSIGMAQ). At Gln154 the chain carries N5-methylglutamine.

It belongs to the universal ribosomal protein uL3 family. In terms of assembly, part of the 50S ribosomal subunit. Forms a cluster with proteins L14 and L19. Methylated by PrmB.

One of the primary rRNA binding proteins, it binds directly near the 3'-end of the 23S rRNA, where it nucleates assembly of the 50S subunit. This chain is Large ribosomal subunit protein uL3, found in Polynucleobacter necessarius subsp. necessarius (strain STIR1).